The following is a 657-amino-acid chain: Tyrosine-protein phosphatase vhp-1 (657 aa).

Positions alanine 21–glutamate 151 constitute a Rhodanese domain. A Tyrosine-protein phosphatase domain is found at glycine 175–lysine 318. Residue cysteine 262 is the Phosphocysteine intermediate of the active site. 3 disordered regions span residues serine 353 to glycine 426, valine 539 to alanine 563, and proline 581 to glutamine 657. Low complexity predominate over residues serine 366 to glutamate 405. Positions glutamine 406–arginine 419 are enriched in polar residues. Composition is skewed to low complexity over residues glycine 542 to alanine 563 and proline 581 to alanine 597.

It belongs to the protein-tyrosine phosphatase family. Non-receptor class dual specificity subfamily. In terms of assembly, may interact with pmk-3. As to expression, expressed in the pharynx, intestine, neurons and vulval hypodermal cells.

The catalysed reaction is O-phospho-L-tyrosyl-[protein] + H2O = L-tyrosyl-[protein] + phosphate. Its function is as follows. Acts preferentially on the c-Jun N-terminal kinase (JNK) and p38 MAPKs. Plays an important role in the heavy metal stress response and in axon regeneration by negatively regulating the kgb-1 (JNK-like) and the pmk-1 (p38-type) MAPK signaling pathways. In Caenorhabditis elegans, this protein is Tyrosine-protein phosphatase vhp-1 (vhp-1).